Here is a 635-residue protein sequence, read N- to C-terminus: 1-deoxy-D-xylulose-5-phosphate synthase (635 aa).

Thiamine diphosphate is bound by residues His74 and 115 to 117 (AHS). Asp146 serves as a coordination point for Mg(2+). Thiamine diphosphate contacts are provided by residues 147 to 148 (GA), Asn176, Tyr283, and Glu365. Residue Asn176 participates in Mg(2+) binding.

The protein belongs to the transketolase family. DXPS subfamily. Homodimer. Mg(2+) serves as cofactor. Thiamine diphosphate is required as a cofactor.

It carries out the reaction D-glyceraldehyde 3-phosphate + pyruvate + H(+) = 1-deoxy-D-xylulose 5-phosphate + CO2. It participates in metabolic intermediate biosynthesis; 1-deoxy-D-xylulose 5-phosphate biosynthesis; 1-deoxy-D-xylulose 5-phosphate from D-glyceraldehyde 3-phosphate and pyruvate: step 1/1. Catalyzes the acyloin condensation reaction between C atoms 2 and 3 of pyruvate and glyceraldehyde 3-phosphate to yield 1-deoxy-D-xylulose-5-phosphate (DXP). This Polaromonas sp. (strain JS666 / ATCC BAA-500) protein is 1-deoxy-D-xylulose-5-phosphate synthase.